A 479-amino-acid polypeptide reads, in one-letter code: UDP-glycosyltransferase 84A3 (479 aa).

Residue H19 is the Proton acceptor of the active site. H19 is an an anthocyanidin binding site. UDP-alpha-D-glucose-binding residues include Q346, H361, W364, N365, S366, and E369. An anthocyanidin is bound at residue G384. 2 residues coordinate UDP-alpha-D-glucose: D385 and Q386.

The protein belongs to the UDP-glycosyltransferase family.

It carries out the reaction (E)-4-coumarate + UDP-alpha-D-glucose = 4-O-(beta-D-glucosyl)-trans-4-coumarate + UDP + H(+). It catalyses the reaction (E)-ferulate + UDP-alpha-D-glucose = 1-O-[(E)-feruloyl]-beta-D-glucose + UDP. The catalysed reaction is (E)-caffeate + UDP-alpha-D-glucose = 1-O-[(E)-caffeoyl]-beta-D-glucose + UDP. The enzyme catalyses (E)-sinapate + UDP-alpha-D-glucose = 1-O-(trans-sinapoyl)-beta-D-glucose + UDP. It carries out the reaction (E)-cinnamate + UDP-alpha-D-glucose = 1-O-(trans-cinnamoyl)-beta-D-glucose + UDP. Its function is as follows. UDP-glucosyltransferase that forms glucose esters with phenylpropanoids. Glucosylates 4-coumarate, ferulate, caffeate, sinapate and cinnamate. The polypeptide is UDP-glycosyltransferase 84A3 (Arabidopsis thaliana (Mouse-ear cress)).